The following is a 241-amino-acid chain: Anti-Pycsar protein Apyc1 (241 aa).

The tract at residues 17–215 (DNNNALLEQD…SVQKKTWLMH (199 aa)) is beta-lactamase-like. Zn(2+) contacts are provided by His59, His61, Asp63, His64, His142, Asp162, and His215.

Belongs to the nuclease anti-Pycsar protein Apyc1 family. Homodimer. The cofactor is Zn(2+).

It catalyses the reaction 3',5'-cyclic CMP + H2O = CMP + H(+). The enzyme catalyses 3',5'-cyclic UMP + H2O = UMP + H(+). Its function is as follows. Counteracts the endogenous Pycsar antiviral defense system. Phosphodiesterase that enables metal-dependent hydrolysis of host cyclic nucleotide Pycsar defense signals such as cCMP and cUMP. This chain is Anti-Pycsar protein Apyc1, found in Paenibacillus harenae.